The primary structure comprises 205 residues: Ribosomal RNA small subunit methyltransferase G (205 aa).

Residues G66, F71, 119–120 (IE), and R135 contribute to the S-adenosyl-L-methionine site.

The protein belongs to the methyltransferase superfamily. RNA methyltransferase RsmG family.

The protein resides in the cytoplasm. It catalyses the reaction guanosine(527) in 16S rRNA + S-adenosyl-L-methionine = N(7)-methylguanosine(527) in 16S rRNA + S-adenosyl-L-homocysteine. In terms of biological role, specifically methylates the N7 position of guanine in position 527 of 16S rRNA. This Rhizobium etli (strain ATCC 51251 / DSM 11541 / JCM 21823 / NBRC 15573 / CFN 42) protein is Ribosomal RNA small subunit methyltransferase G.